The chain runs to 862 residues: Cone cGMP-specific 3',5'-cyclic phosphodiesterase subunit alpha' (862 aa).

2 GAF domains span residues 75 to 224 and 256 to 433; these read SMEK…SLVL and DIER…GWSV. Residues Ser97, Asn116, 169 to 172, and Thr176 contribute to the 3',5'-cyclic GMP site; that span reads DKKT. Residues 486-819 enclose the PDEase domain; that stretch reads DEKDLIRILK…VEWKTRADEY (334 aa). The active-site Proton donor is His562. Positions 566, 602, 603, and 723 each coordinate a divalent metal cation. Residues 830–842 are compositionally biased toward basic and acidic residues; that stretch reads KKKEEEAAAKKAE. The segment at 830-862 is disordered; that stretch reads KKKEEEAAAKKAENAAGGGGGGEDGKSKTCIVL. Cysteine methyl ester is present on Cys859. Cys859 carries S-geranylgeranyl cysteine lipidation. The propeptide at 860-862 is removed in mature form; the sequence is IVL.

This sequence belongs to the cyclic nucleotide phosphodiesterase family. As to quaternary structure, composed of two alpha' subunits that are associated with 3 smaller proteins of 11, 13, and 15 kDa. A divalent metal cation is required as a cofactor.

It localises to the cell membrane. The catalysed reaction is 3',5'-cyclic GMP + H2O = GMP + H(+). Functionally, as cone-specific cGMP phosphodiesterase, it plays an essential role in light detection and cone phototransduction by rapidly decreasing intracellular levels of cGMP. The sequence is that of Cone cGMP-specific 3',5'-cyclic phosphodiesterase subunit alpha' (PDE6C) from Gallus gallus (Chicken).